The chain runs to 328 residues: Tetraacyldisaccharide 4'-kinase (328 aa).

55-62 (TAGGNGKT) is an ATP binding site.

This sequence belongs to the LpxK family.

It carries out the reaction lipid A disaccharide (E. coli) + ATP = lipid IVA (E. coli) + ADP + H(+). It participates in glycolipid biosynthesis; lipid IV(A) biosynthesis; lipid IV(A) from (3R)-3-hydroxytetradecanoyl-[acyl-carrier-protein] and UDP-N-acetyl-alpha-D-glucosamine: step 6/6. Its function is as follows. Transfers the gamma-phosphate of ATP to the 4'-position of a tetraacyldisaccharide 1-phosphate intermediate (termed DS-1-P) to form tetraacyldisaccharide 1,4'-bis-phosphate (lipid IVA). In Escherichia coli (strain K12), this protein is Tetraacyldisaccharide 4'-kinase (lpxK).